Reading from the N-terminus, the 169-residue chain is Cell division inhibitor SulA (169 aa).

A ftsZ binding region spans residues 106-112 (ALRTGNY). Positions 162–169 (KIHSNLYH) are lon protease binding.

Belongs to the SulA family. As to quaternary structure, interacts with FtsZ. Post-translationally, is rapidly cleaved and degraded by the Lon protease once DNA damage is repaired.

Component of the SOS system and an inhibitor of cell division. Accumulation of SulA causes rapid cessation of cell division and the appearance of long, non-septate filaments. In the presence of GTP, binds a polymerization-competent form of FtsZ in a 1:1 ratio, thus inhibiting FtsZ polymerization and therefore preventing it from participating in the assembly of the Z ring. This mechanism prevents the premature segregation of damaged DNA to daughter cells during cell division. The chain is Cell division inhibitor SulA from Salmonella gallinarum (strain 287/91 / NCTC 13346).